The following is a 634-amino-acid chain: Ras and EF-hand domain-containing protein homolog (634 aa).

EF-hand domains are found at residues 5–33 (EVEN…CPQL) and 33–68 (LDDN…TVQH). Ca(2+)-binding residues include D46, D48, S50, K52, and E57. Positions 169 to 310 (LSEKKHENER…RCEFDQKQDE (142 aa)) form a coiled coil. The tract at residues 212–234 (ARQEERDRLTKEKEEMRQRMSDE) is disordered. Residues 449–454 (AVGKSS), 552–555 (NKVD), and 585–586 (AL) each bind GTP. The propeptide at 632–634 (RGS) is removed in mature form.

This sequence belongs to the small GTPase superfamily. Rab family. In terms of assembly, homodimer.

The protein localises to the cytoplasm. It is found in the perinuclear region. Functionally, binds GTP and GDP. Plays a role in uterine seam cell development. The chain is Ras and EF-hand domain-containing protein homolog from Caenorhabditis elegans.